The sequence spans 303 residues: Recombination-associated protein RdgC (303 aa).

The protein belongs to the RdgC family.

It is found in the cytoplasm. The protein resides in the nucleoid. In terms of biological role, may be involved in recombination. In Aeromonas hydrophila subsp. hydrophila (strain ATCC 7966 / DSM 30187 / BCRC 13018 / CCUG 14551 / JCM 1027 / KCTC 2358 / NCIMB 9240 / NCTC 8049), this protein is Recombination-associated protein RdgC.